The sequence spans 348 residues: NADH-ubiquinone oxidoreductase chain 2 (348 aa).

9 helical membrane-spanning segments follow: residues 13–33 (VITG…WAGL), 60–80 (FLAQ…NNLL), 96–116 (PLAM…HFWV), 124–144 (PLTS…SIMY), 150–170 (INTH…SWGG), 200–220 (TITT…FLTL), 241–261 (LMPL…LTGF), 278–298 (IIPT…MRLI), and 325–345 (LFIP…PLIL).

This sequence belongs to the complex I subunit 2 family. Core subunit of respiratory chain NADH dehydrogenase (Complex I) which is composed of 45 different subunits. Interacts with TMEM242.

Its subcellular location is the mitochondrion inner membrane. The catalysed reaction is a ubiquinone + NADH + 5 H(+)(in) = a ubiquinol + NAD(+) + 4 H(+)(out). Its function is as follows. Core subunit of the mitochondrial membrane respiratory chain NADH dehydrogenase (Complex I) which catalyzes electron transfer from NADH through the respiratory chain, using ubiquinone as an electron acceptor. Essential for the catalytic activity and assembly of complex I. The protein is NADH-ubiquinone oxidoreductase chain 2 of Papio hamadryas (Hamadryas baboon).